Reading from the N-terminus, the 431-residue chain is MQWLDLPHVQRAQGNVRLPGSKSISNRILLLSALAEGTTMVSNLLESDDTGRMLDALRLLGVAIVRTDDGKYRVAGCKGKFPVREAELFLGNAGTAFRPLTAVLALMQGHYRLSGVPRMHERPIGDLVDALRQIGAVITCLEHEGFPPLEIHPAVIRPGNISIKGNISSQFLSGLLMALPLTGEPVTIVVSGTLISQPYVALTIAQMARFGVQVKQESWQRFMLPENQTYRSPGKIAVEGDASSASYFLAAGAIAGGPVRIEGAGSDSCQGDIRFVEALEAMGARISMGSDWIESGAPDGGALKAIDFDCNHIPDAAMTLATMALFARGTTTLRNIASWRVKETDRIAAMSAELRKLGARVEAGDDFLRITPPDGPLTADAVIDTYDDHRMAMCFSLVSLSVPVRINDPGCVAKTFPDYFEKFAAITHTPF.

3-phosphoshikimate contacts are provided by Lys22, Ser23, and Arg27. Residue Lys22 participates in phosphoenolpyruvate binding. Residues Gly94 and Arg122 each contribute to the phosphoenolpyruvate site. Ser168, Ser169, Gln170, Ser196, Asp315, and Lys342 together coordinate 3-phosphoshikimate. Phosphoenolpyruvate is bound at residue Gln170. Asp315 (proton acceptor) is an active-site residue. Phosphoenolpyruvate-binding residues include Arg346, Arg390, and Lys414.

This sequence belongs to the EPSP synthase family. Monomer.

Its subcellular location is the cytoplasm. The catalysed reaction is 3-phosphoshikimate + phosphoenolpyruvate = 5-O-(1-carboxyvinyl)-3-phosphoshikimate + phosphate. Its pathway is metabolic intermediate biosynthesis; chorismate biosynthesis; chorismate from D-erythrose 4-phosphate and phosphoenolpyruvate: step 6/7. Functionally, catalyzes the transfer of the enolpyruvyl moiety of phosphoenolpyruvate (PEP) to the 5-hydroxyl of shikimate-3-phosphate (S3P) to produce enolpyruvyl shikimate-3-phosphate and inorganic phosphate. This is 3-phosphoshikimate 1-carboxyvinyltransferase from Nitrosomonas europaea (strain ATCC 19718 / CIP 103999 / KCTC 2705 / NBRC 14298).